Consider the following 385-residue polypeptide: Di-N-acetylchitobiase (385 aa).

A signal peptide spans 1 to 38 (MSRPQLRRWRLVSSPPSGVPGLALLALLALLALRLAAG). The GH18 domain occupies 39 to 385 (TDCPCPEPEL…EVLKPKLLQR (347 aa)). E143 acts as the Proton donor in catalysis. N193, N228, N262, and N299 each carry an N-linked (GlcNAc...) asparagine glycan.

This sequence belongs to the glycosyl hydrolase 18 family.

The protein resides in the lysosome. Its function is as follows. Involved in the degradation of asparagine-linked glycoproteins. Hydrolyze of N-acetyl-beta-D-glucosamine (1-4)N-acetylglucosamine chitobiose core from the reducing end of the bond, it requires prior cleavage by glycosylasparaginase. In Homo sapiens (Human), this protein is Di-N-acetylchitobiase (CTBS).